We begin with the raw amino-acid sequence, 127 residues long: MEIFGHVVSGLGEGKFFVGLTHYKNKFEELTGFTPFEGTLNVKLKHNFNLDEFNPIEFDGFEIDGKKYFGGKVLLIKLFNKQGNSINCAVVAPKKTDHSKKTLEIIAPIQLRKFLLLKNSDVVKLVI.

A CDP-binding site is contributed by 10–15 (GLGEGK). Mg(2+) contacts are provided by T39 and N41. FMN-binding residues include T96 and E104. 109–112 (IQLR) lines the CDP pocket.

This sequence belongs to the archaeal riboflavin kinase family. Mg(2+) serves as cofactor.

The enzyme catalyses riboflavin + CTP = CDP + FMN + H(+). Its pathway is cofactor biosynthesis; FMN biosynthesis; FMN from riboflavin (CTP route): step 1/1. In terms of biological role, catalyzes the CTP-dependent phosphorylation of riboflavin (vitamin B2) to form flavin mononucleotide (FMN). The sequence is that of Riboflavin kinase from Methanococcus maripaludis (strain DSM 14266 / JCM 13030 / NBRC 101832 / S2 / LL).